A 444-amino-acid chain; its full sequence is 3-phosphoshikimate 1-carboxyvinyltransferase (444 aa).

Lys-32, Ser-33, and Arg-37 together coordinate 3-phosphoshikimate. Residue Lys-32 participates in phosphoenolpyruvate binding. Residues Gly-105 and Arg-133 each coordinate phosphoenolpyruvate. 3-phosphoshikimate-binding residues include Ser-178, Gln-180, Asp-326, and Lys-353. Position 180 (Gln-180) interacts with phosphoenolpyruvate. Asp-326 serves as the catalytic Proton acceptor. 2 residues coordinate phosphoenolpyruvate: Arg-357 and Arg-398.

The protein belongs to the EPSP synthase family. As to quaternary structure, monomer.

Its subcellular location is the cytoplasm. The enzyme catalyses 3-phosphoshikimate + phosphoenolpyruvate = 5-O-(1-carboxyvinyl)-3-phosphoshikimate + phosphate. It participates in metabolic intermediate biosynthesis; chorismate biosynthesis; chorismate from D-erythrose 4-phosphate and phosphoenolpyruvate: step 6/7. Catalyzes the transfer of the enolpyruvyl moiety of phosphoenolpyruvate (PEP) to the 5-hydroxyl of shikimate-3-phosphate (S3P) to produce enolpyruvyl shikimate-3-phosphate and inorganic phosphate. This is 3-phosphoshikimate 1-carboxyvinyltransferase from Nitrosococcus oceani (strain ATCC 19707 / BCRC 17464 / JCM 30415 / NCIMB 11848 / C-107).